The chain runs to 251 residues: Ubiquinone/menaquinone biosynthesis C-methyltransferase UbiE (251 aa).

S-adenosyl-L-methionine contacts are provided by residues Thr74, Asp95, 123-124 (NA), and Ser140.

This sequence belongs to the class I-like SAM-binding methyltransferase superfamily. MenG/UbiE family.

The catalysed reaction is a 2-demethylmenaquinol + S-adenosyl-L-methionine = a menaquinol + S-adenosyl-L-homocysteine + H(+). The enzyme catalyses a 2-methoxy-6-(all-trans-polyprenyl)benzene-1,4-diol + S-adenosyl-L-methionine = a 5-methoxy-2-methyl-3-(all-trans-polyprenyl)benzene-1,4-diol + S-adenosyl-L-homocysteine + H(+). It functions in the pathway quinol/quinone metabolism; menaquinone biosynthesis; menaquinol from 1,4-dihydroxy-2-naphthoate: step 2/2. The protein operates within cofactor biosynthesis; ubiquinone biosynthesis. Methyltransferase required for the conversion of demethylmenaquinol (DMKH2) to menaquinol (MKH2) and the conversion of 2-polyprenyl-6-methoxy-1,4-benzoquinol (DDMQH2) to 2-polyprenyl-3-methyl-6-methoxy-1,4-benzoquinol (DMQH2). In Klebsiella pneumoniae subsp. pneumoniae (strain ATCC 700721 / MGH 78578), this protein is Ubiquinone/menaquinone biosynthesis C-methyltransferase UbiE.